We begin with the raw amino-acid sequence, 64 residues long: Protein DsrB (64 aa).

This sequence belongs to the DsrB family.

The sequence is that of Protein DsrB from Salmonella arizonae (strain ATCC BAA-731 / CDC346-86 / RSK2980).